Here is a 244-residue protein sequence, read N- to C-terminus: MKINFLILTTFIILTSLGFWQLSRLKEKKLFLDSIQSHIISPGINLEKVQENLLYHKVKITGQFLPNKDIYLYGIRLMAMEKDGYYLVTPFKTIADQVILVVRGWFSNRNKNIIMKATNNQIHEIIGVIMPSEKTLSYLPANDIKNNVWLTLDLKEASKALKLNLENFYIIAEGKDISNLDILLPLSLNHLALIKNDHLEYAITWFGLAIFLIVIYVIYRHSSNIPVPVNKQLKSLEQKNNQKN.

The next 2 membrane-spanning stretches (helical) occupy residues 7 to 23 (ILTT…WQLS) and 201 to 219 (YAIT…YVIY).

This sequence belongs to the SURF1 family.

The protein resides in the cell membrane. The chain is SURF1-like protein from Rickettsia prowazekii (strain Madrid E).